Consider the following 122-residue polypeptide: MNKEEIMSAIEEMSVLELSELVEDLEEKFGVSAAAPVAVAGGAAGAGAAAEEKSEFDVFLADIGGKKIKVIKAVRELTGLGLKEAKGVVDDAPGNVKEGLSKEDAEEMKEKLEEAGATVELK.

Positions 94–122 (GNVKEGLSKEDAEEMKEKLEEAGATVELK) are disordered. The segment covering 99–114 (GLSKEDAEEMKEKLEE) has biased composition (basic and acidic residues).

Belongs to the bacterial ribosomal protein bL12 family. As to quaternary structure, homodimer. Part of the ribosomal stalk of the 50S ribosomal subunit. Forms a multimeric L10(L12)X complex, where L10 forms an elongated spine to which 2 to 4 L12 dimers bind in a sequential fashion. Binds GTP-bound translation factors.

Functionally, forms part of the ribosomal stalk which helps the ribosome interact with GTP-bound translation factors. Is thus essential for accurate translation. The sequence is that of Large ribosomal subunit protein bL12 from Halanaerobium praevalens.